The primary structure comprises 115 residues: Large ribosomal subunit protein bL19 (115 aa).

Belongs to the bacterial ribosomal protein bL19 family.

Functionally, this protein is located at the 30S-50S ribosomal subunit interface and may play a role in the structure and function of the aminoacyl-tRNA binding site. This chain is Large ribosomal subunit protein bL19, found in Parabacteroides distasonis (strain ATCC 8503 / DSM 20701 / CIP 104284 / JCM 5825 / NCTC 11152).